Reading from the N-terminus, the 564-residue chain is E3 ubiquitin-protein ligase hrd-like protein 1 (564 aa).

Residues 17–37 (SYLALSVLVAIVASVTVFTTF) form a helical membrane-spanning segment. N-linked (GlcNAc...) asparagine glycosylation occurs at Asn-53. 7 helical membrane passes run 61-81 (YGLN…HYIL), 86-106 (LIWV…RLII), 123-143 (QAFF…IGPQ), 148-168 (VMPW…QFIT), 185-205 (KISF…FLIS), 215-235 (PAVL…YILF), and 272-292 (LSFA…IFFL). An RING-type; atypical zinc finger spans residues 335–373 (CVVCWELLGTSRRLPCSHQFHDWCLMWWLAQDSSCPTCR). Residues 432–474 (QLQTMLEQVREMFPQMSVDIIMTDLRQSGSAQSTIENILEGRI) form the CUE domain.

It is found in the membrane. In terms of biological role, proposed to have a role in neuroprotection. This is E3 ubiquitin-protein ligase hrd-like protein 1 (hrdl-1) from Caenorhabditis elegans.